A 375-amino-acid chain; its full sequence is Peptide chain release factor 1 (375 aa).

The residue at position 237 (Gln-237) is an N5-methylglutamine. The segment covering 289–299 (AAREAQERQER) has biased composition (basic and acidic residues). The tract at residues 289-326 (AAREAQERQERASQVGSGDRSEKIRTYNYPQNRVTDHR) is disordered.

This sequence belongs to the prokaryotic/mitochondrial release factor family. Methylated by PrmC. Methylation increases the termination efficiency of RF1.

The protein localises to the cytoplasm. Functionally, peptide chain release factor 1 directs the termination of translation in response to the peptide chain termination codons UAG and UAA. In Deinococcus radiodurans (strain ATCC 13939 / DSM 20539 / JCM 16871 / CCUG 27074 / LMG 4051 / NBRC 15346 / NCIMB 9279 / VKM B-1422 / R1), this protein is Peptide chain release factor 1 (prfA).